The chain runs to 740 residues: ATP-dependent RNA helicase DDX1 (740 aa).

The interval 1 to 295 (MAAFSEMGVM…APKALIVEPS (295 aa)) is necessary for interaction with HNRNPK. Residues 1–448 (MAAFSEMGVM…DTVHHVVVPV (448 aa)) are interaction with dsRNA. A necessary for interaction with RELA region spans residues 1-525 (MAAFSEMGVM…KIDCDNLEQY (525 aa)). The region spanning 2 to 428 (AAFSEMGVMP…SEKIMHFPTW (427 aa)) is the Helicase ATP-binding domain. ATP is bound at residue 46-53 (AETGSGKT). The B30.2/SPRY domain occupies 70 to 247 (DQQEGKKGKA…LKFNFGEEEF (178 aa)). 2 positions are modified to N6-acetyllysine: Lys239 and Lys268. Residue Lys281 is modified to N6-acetyllysine; alternate. Lys281 is covalently cross-linked (Glycyl lysine isopeptide (Lys-Gly) (interchain with G-Cter in SUMO2); alternate). A DEAD box motif is present at residues 370-373 (DEAD). Ser481 is modified (phosphoserine). The Helicase C-terminal domain occupies 493 to 681 (KGEYAVRAIK…QVEPDIKVPV (189 aa)). The necessary for interaction with HNRNPK stretch occupies residues 525–740 (YFMQQGGGPD…YLPNQLFRTF (216 aa)).

It belongs to the DEAD box helicase family. DDX1 subfamily. As to quaternary structure, found in a multi-helicase-TICAM1 complex at least composed of DHX36, DDX1, DDX21 and TICAM1; this complex exists in resting cells with or without poly(I:C) RNA ligand stimulation. Interacts with DHX36. Interacts (via B30.2/SPRY domain) with DDX21 (via N-terminus); this interaction serves as bridges to TICAM1. Interacts with FAM98A (via N- and C-terminus). Interacts with PHF5A (via C-terminus). Interacts with MBNL1. Interacts with CSTF2. Interacts with HNRNPK. Interacts with ATM. Interacts with RELA (via C-terminus). Component of the tRNA-splicing ligase complex. Interacts with PQBP1. Interacts with ERCC6. Post-translationally, phosphorylated by ATM kinase; phosphorylation is increased in response to ionizing radiation (IR).

The protein localises to the nucleus. It is found in the cytoplasm. The protein resides in the cytoplasmic granule. Its subcellular location is the cytosol. It localises to the mitochondrion. It carries out the reaction ATP + H2O = ADP + phosphate + H(+). Its function is as follows. Acts as an ATP-dependent RNA helicase, able to unwind both RNA-RNA and RNA-DNA duplexes. Possesses 5' single-stranded RNA overhang nuclease activity. Possesses ATPase activity on various RNA, but not DNA polynucleotides. May play a role in RNA clearance at DNA double-strand breaks (DSBs), thereby facilitating the template-guided repair of transcriptionally active regions of the genome. Together with RELA, acts as a coactivator to enhance NF-kappa-B-mediated transcriptional activation. Acts as a positive transcriptional regulator of cyclin CCND2 expression. Binds to the cyclin CCND2 promoter region. Associates with chromatin at the NF-kappa-B promoter region via association with RELA. Binds to poly(A) RNA. May be involved in 3'-end cleavage and polyadenylation of pre-mRNAs. Component of the tRNA-splicing ligase complex required to facilitate the enzymatic turnover of catalytic subunit RTCB: together with archease (ZBTB8OS), acts by facilitating the guanylylation of RTCB, a key intermediate step in tRNA ligation. Component of a multi-helicase-TICAM1 complex that acts as a cytoplasmic sensor of viral double-stranded RNA (dsRNA) and plays a role in the activation of a cascade of antiviral responses including the induction of pro-inflammatory cytokines via the adapter molecule TICAM1. Specifically binds (via helicase ATP-binding domain) on both short and long poly(I:C) dsRNA. In Bos taurus (Bovine), this protein is ATP-dependent RNA helicase DDX1 (DDX1).